The following is a 261-amino-acid chain: Small ribosomal subunit protein uS2 (261 aa).

Residue Ser-2 is modified to N-acetylserine. Positions Gln-212–Trp-261 are disordered. Residues Glu-222–Trp-244 are compositionally biased toward acidic residues.

Belongs to the universal ribosomal protein uS2 family. As to quaternary structure, component of the small ribosomal subunit. Mature ribosomes consist of a small (40S) and a large (60S) subunit. The 40S subunit contains about 33 different proteins and 1 molecule of RNA (18S). The 60S subunit contains about 49 different proteins and 3 molecules of RNA (25S, 5.8S and 5S). Interacts with RPS21.

The protein resides in the cytoplasm. Required for the assembly and/or stability of the 40S ribosomal subunit. Required for the processing of the 20S rRNA-precursor to mature 18S rRNA in a late step of the maturation of 40S ribosomal subunits. The protein is Small ribosomal subunit protein uS2 of Candida tropicalis (Yeast).